The following is a 140-amino-acid chain: Translation initiation factor 2 subunit beta (140 aa).

This sequence belongs to the eIF-2-beta/eIF-5 family. As to quaternary structure, heterotrimer composed of an alpha, a beta and a gamma chain.

In terms of biological role, eIF-2 functions in the early steps of protein synthesis by forming a ternary complex with GTP and initiator tRNA. In Metallosphaera sedula (strain ATCC 51363 / DSM 5348 / JCM 9185 / NBRC 15509 / TH2), this protein is Translation initiation factor 2 subunit beta.